The sequence spans 1436 residues: Probable deoxyribonuclease RhsB (1436 aa).

The disordered stretch occupies residues 16–42; it reads HAGNRPNPPADRPQPCQGKPPTSPGKT. 2 helical membrane passes run 48–68 and 70–90; these read FLGA…VAAA and VFLV…LAVF. YD repeat units lie at residues 486–521, 569–605, 612–647, 766–799, and 847–879; these read YNTA…CADG, YDEV…DGSG, YDDA…GPDA, DLLT…PDGS, and YDAR…VSSA.

Belongs to the RHS/WapA nuclease family.

It is found in the membrane. Its function is as follows. Toxic component of a toxin-immunity protein module, which functions as a cellular contact-dependent growth inhibition (CDI) system. This protein may be a nuclease that is specifically inhibited by its cognate immunity protein RhsBI. Upon expression of the C-terminus (residues 1284-1436) in E.coli growth is inhibited, cells elongate, nucleoids condense and plasmid DNA is degraded; these effects are blocked specifically by cognate immunity protein RshIB. Cell contact is necessary for growth inhibition. This is Probable deoxyribonuclease RhsB (rhsB) from Dickeya dadantii (strain 3937) (Erwinia chrysanthemi (strain 3937)).